Consider the following 455-residue polypeptide: Bleomycin hydrolase (455 aa).

The residue at position 1 (Met1) is an N-acetylmethionine. Residues Cys73 and His372 contribute to the active site. Lys391 is modified (N6-acetyllysine). The active site involves Asn396.

This sequence belongs to the peptidase C1 family. In terms of assembly, homohexamer. Interacts with NUDT12 (via ANK repeats).

The protein resides in the cytoplasm. It is found in the cytoplasmic granule. It carries out the reaction Inactivates bleomycin B2 (a cytotoxic glycometallopeptide) by hydrolysis of a carboxyamide bond of beta-aminoalanine, but also shows general aminopeptidase activity. The specificity varies somewhat with source, but amino acid arylamides of Met, Leu and Ala are preferred.. Its function is as follows. The normal physiological role of BLM hydrolase is unknown, but it catalyzes the inactivation of the antitumor drug BLM (a glycopeptide) by hydrolyzing the carboxamide bond of its B-aminoalaninamide moiety thus protecting normal and malignant cells from BLM toxicity. This Mus musculus (Mouse) protein is Bleomycin hydrolase (Blmh).